The chain runs to 135 residues: U-myrmeciitoxin(01)-Mg7a (135 aa).

A signal peptide spans 1 to 21 (MKLSCLSLALAIILLLAIVHS). Positions 22–72 (PNMEVKALAGPEADAIGFADAFGEADAFGEADAFGEADAFGEADAFGEADA) are excised as a propeptide. The interval 69 to 95 (EADAKRSKSSSKTKPKKPKKPKKKIKI) is disordered. Residues 75 to 93 (SKSSSKTKPKKPKKPKKKI) are compositionally biased toward basic residues. O-linked (GalNAc...) serine glycosylation occurs at Ser120. O-linked (GalNAc...) threonine glycans are attached at residues Thr129 and Thr130.

The protein belongs to the formicidae venom precursor-01 superfamily. In terms of processing, glycosylation is critical to maintaining the aqueous solubility of this protein, but does not directly contribute to its activity. As to expression, expressed by the venom gland.

The protein resides in the secreted. The protein localises to the target cell membrane. Functionally, neurotoxin that triggers pain behavior and inflammation in mammals, and is paralytic and lethal to insects. Causes a time-dependent increase in cell leak current. May act by targeting membranes. The protein is U-myrmeciitoxin(01)-Mg7a of Myrmecia gulosa (Red bulldog ant).